A 367-amino-acid chain; its full sequence is Inositol-3-phosphate synthase (367 aa).

Residue Ser-2 is modified to N-acetylserine. Residue Lys-73 forms an Isoglutamyl lysine isopeptide (Lys-Gln) (interchain with Q-Cter in protein Pup) linkage. NAD(+)-binding residues include Asp-78, Ala-137, Tyr-157, Ser-200, Asp-235, and Lys-248.

The protein belongs to the myo-inositol 1-phosphate synthase family. NAD(+) is required as a cofactor. Pupylated at Lys-73 by the prokaryotic ubiquitin-like protein Pup, which leads to its degradation by the proteasome.

It carries out the reaction D-glucose 6-phosphate = 1D-myo-inositol 3-phosphate. Its function is as follows. Key enzyme in myo-inositol biosynthesis pathway that catalyzes the conversion of glucose 6-phosphate to 1D-myo-inositol 3-phosphate in a NAD-dependent manner. This chain is Inositol-3-phosphate synthase (ino1), found in Mycobacterium tuberculosis (strain ATCC 25618 / H37Rv).